Consider the following 286-residue polypeptide: MTSITHTISEIQKLTRQAISDARPVVLIPTMGALHEGHLSLVDTAYSLELDNPFVIMSIFVNPLQFAAGEDLDSYPRTLDADAAKLATHNHQVHAIFAPSPAEMYPLGPRTTITPGAAALRFEGATRPTHFAGVLTVVNKLFQITQCQHAIFGEKDFQQLALIRQMVADFNLPVHVHGSPLMRDHDGVALSSRNAYLSDTERVEARRISAALRQAAMFHVKHDIIAAAINAMAGMDIDYIDVVAPDFSEPTAGNELYGDARIITAVKVGSTRLLDNMAVNVEKPNA.

ATP is bound at residue 31-38 (MGALHEGH). Histidine 38 acts as the Proton donor in catalysis. Glutamine 65 contacts (R)-pantoate. Residue glutamine 65 coordinates beta-alanine. Residue 153-156 (GEKD) coordinates ATP. Glutamine 159 contributes to the (R)-pantoate binding site. Position 190 to 193 (190 to 193 (LSSR)) interacts with ATP.

The protein belongs to the pantothenate synthetase family. Homodimer.

It is found in the cytoplasm. The enzyme catalyses (R)-pantoate + beta-alanine + ATP = (R)-pantothenate + AMP + diphosphate + H(+). Its pathway is cofactor biosynthesis; (R)-pantothenate biosynthesis; (R)-pantothenate from (R)-pantoate and beta-alanine: step 1/1. Catalyzes the condensation of pantoate with beta-alanine in an ATP-dependent reaction via a pantoyl-adenylate intermediate. In Corynebacterium diphtheriae (strain ATCC 700971 / NCTC 13129 / Biotype gravis), this protein is Pantothenate synthetase.